Reading from the N-terminus, the 324-residue chain is Protein translocase subunit SecF (324 aa).

A run of 6 helical transmembrane segments spans residues 16–36 (FFWA…ASLV), 145–165 (LIRS…VYIW), 174–194 (LGSV…FALF), 201–221 (TTVA…VVVF), 247–269 (TLSR…LVFG), and 276–295 (FVFA…VYMA).

This sequence belongs to the SecD/SecF family. SecF subfamily. Forms a complex with SecD. Part of the essential Sec protein translocation apparatus which comprises SecA, SecYEG and auxiliary proteins SecDF-YajC and YidC.

The protein localises to the cell inner membrane. In terms of biological role, part of the Sec protein translocase complex. Interacts with the SecYEG preprotein conducting channel. SecDF uses the proton motive force (PMF) to complete protein translocation after the ATP-dependent function of SecA. The sequence is that of Protein translocase subunit SecF from Cereibacter sphaeroides (strain ATCC 17023 / DSM 158 / JCM 6121 / CCUG 31486 / LMG 2827 / NBRC 12203 / NCIMB 8253 / ATH 2.4.1.) (Rhodobacter sphaeroides).